The following is a 258-amino-acid chain: Proteasome subunit alpha (258 aa).

Belongs to the peptidase T1A family. The 20S proteasome core is composed of 14 alpha and 14 beta subunits that assemble into four stacked heptameric rings, resulting in a barrel-shaped structure. The two inner rings, each composed of seven catalytic beta subunits, are sandwiched by two outer rings, each composed of seven alpha subunits. The catalytic chamber with the active sites is on the inside of the barrel. Has a gated structure, the ends of the cylinder being occluded by the N-termini of the alpha-subunits. Is capped by the proteasome-associated ATPase, ARC.

The protein localises to the cytoplasm. It participates in protein degradation; proteasomal Pup-dependent pathway. The formation of the proteasomal ATPase ARC-20S proteasome complex, likely via the docking of the C-termini of ARC into the intersubunit pockets in the alpha-rings, may trigger opening of the gate for substrate entry. Interconversion between the open-gate and close-gate conformations leads to a dynamic regulation of the 20S proteasome proteolysis activity. Functionally, component of the proteasome core, a large protease complex with broad specificity involved in protein degradation. This Nocardia farcinica (strain IFM 10152) protein is Proteasome subunit alpha.